The chain runs to 452 residues: MRRALDDRRRGPHGPEGKPPMRVLLTCIAHNTHYYNLVPVAWALRAAGHEVRVAAQPALTDTITASGLTAVPVGGNESVLEFVTEIGGDPGPYQRGMDFAETCGEPLSYEHALGQQTAMSALCFAPFNCDSTIDDMVALARSWRPDLVLWEPFTYAGPIAAHACGAAHARLLWGPDVILNARAQFRRLAAGQPEERREDPVAEWLGWTLERHGLTAERETVEELIGGQWTLDPTAESLRLPAAGRVVPFRFVPYNGRSVLPDWLLRKPGRPRVCFTLGVSARETYGRDAVPFHELLAGLGDLDAEIVATLDPGQLSGAGEVPRNVRAVDFVPMDALLPTCSAVVHHGGAGTCFTATLNGLPQIVVAALWDAPLKGAQLAEAGAGVSIAPEKLDAATLRAGVVRALEDEDMRRSAGLLRAEMLAEPTPAGLVPQLERLTALHRNGRSRSAPER.

Residues 1–16 (MRRALDDRRRGPHGPE) are compositionally biased toward basic and acidic residues. Residues 1–20 (MRRALDDRRRGPHGPEGKPP) form a disordered region.

This sequence belongs to the glycosyltransferase 28 family.

It catalyses the reaction tylactone + dTDP-alpha-D-mycaminose = 5-O-beta-D-mycaminosyltylactone + dTDP + H(+). Its pathway is antibiotic biosynthesis; tylosin biosynthesis. With respect to regulation, the activity of TylM2 is substantially increased by the addition of the accessory protein TylM3. Involved in the biosynthesis of the macrolide antibiotic tylosin derived from the polyketide lactone tylactone. Catalyzes the transfer of alpha-D-mycaminosyl from dTDP-alpha-D-mycaminose to the 5-hydroxyl group of tylactone to yield 5-O-mycaminosytylactone. It can also accept 16-membered tylactone and 12-membered ring macrolide. In Streptomyces fradiae (Streptomyces roseoflavus), this protein is Tylactone mycaminosyltransferase.